The following is a 192-amino-acid chain: Peptidyl-tRNA hydrolase (192 aa).

Y14 contributes to the tRNA binding site. The Proton acceptor role is filled by H19. TRNA contacts are provided by Y61, N63, and N107.

It belongs to the PTH family. As to quaternary structure, monomer.

It is found in the cytoplasm. It catalyses the reaction an N-acyl-L-alpha-aminoacyl-tRNA + H2O = an N-acyl-L-amino acid + a tRNA + H(+). Functionally, hydrolyzes ribosome-free peptidyl-tRNAs (with 1 or more amino acids incorporated), which drop off the ribosome during protein synthesis, or as a result of ribosome stalling. Its function is as follows. Catalyzes the release of premature peptidyl moieties from peptidyl-tRNA molecules trapped in stalled 50S ribosomal subunits, and thus maintains levels of free tRNAs and 50S ribosomes. In Wolinella succinogenes (strain ATCC 29543 / DSM 1740 / CCUG 13145 / JCM 31913 / LMG 7466 / NCTC 11488 / FDC 602W) (Vibrio succinogenes), this protein is Peptidyl-tRNA hydrolase.